The chain runs to 213 residues: FMN-dependent NADH:quinone oxidoreductase 3 (213 aa).

Residues Ser10, 16–18 (SVS), and 96–99 (MYNF) each bind FMN.

This sequence belongs to the azoreductase type 1 family. In terms of assembly, homodimer. It depends on FMN as a cofactor.

It catalyses the reaction 2 a quinone + NADH + H(+) = 2 a 1,4-benzosemiquinone + NAD(+). The enzyme catalyses N,N-dimethyl-1,4-phenylenediamine + anthranilate + 2 NAD(+) = 2-(4-dimethylaminophenyl)diazenylbenzoate + 2 NADH + 2 H(+). In terms of biological role, quinone reductase that provides resistance to thiol-specific stress caused by electrophilic quinones. Shows a preference for naphthoquinones such as plumbagin. Its function is as follows. Also exhibits azoreductase activity. Catalyzes the reductive cleavage of the azo bond in aromatic azo compounds to the corresponding amines. Preferred substrates are methyl red, amaranth and p-aminoazobenzene sulfonamide (PAABSA). The polypeptide is FMN-dependent NADH:quinone oxidoreductase 3 (Pseudomonas aeruginosa (strain ATCC 15692 / DSM 22644 / CIP 104116 / JCM 14847 / LMG 12228 / 1C / PRS 101 / PAO1)).